Here is a 436-residue protein sequence, read N- to C-terminus: Tol-Pal system protein TolB (436 aa).

Residues 1 to 28 form the signal peptide; the sequence is MMKCSFFRAILVAVGLMAAAVVATPANA.

Belongs to the TolB family. The Tol-Pal system is composed of five core proteins: the inner membrane proteins TolA, TolQ and TolR, the periplasmic protein TolB and the outer membrane protein Pal. They form a network linking the inner and outer membranes and the peptidoglycan layer.

The protein localises to the periplasm. Functionally, part of the Tol-Pal system, which plays a role in outer membrane invagination during cell division and is important for maintaining outer membrane integrity. This Rhizobium etli (strain CIAT 652) protein is Tol-Pal system protein TolB.